The sequence spans 344 residues: 2-aminoethylphosphonate--pyruvate transaminase (344 aa).

Residue K194 is modified to N6-(pyridoxal phosphate)lysine.

This sequence belongs to the class-V pyridoxal-phosphate-dependent aminotransferase family. PhnW subfamily. As to quaternary structure, homodimer. The cofactor is pyridoxal 5'-phosphate.

It carries out the reaction (2-aminoethyl)phosphonate + pyruvate = phosphonoacetaldehyde + L-alanine. Its function is as follows. Involved in phosphonate degradation. This Bacillus cereus protein is 2-aminoethylphosphonate--pyruvate transaminase.